A 30-amino-acid polypeptide reads, in one-letter code: Bacteriocin plantaricin KL-1Y (30 aa).

It localises to the secreted. In terms of biological role, bacteriocin with activity against species of Lactobacillus, Lactococcus, Pediococcus, Leuconostoc and against B.subtilis and, to a lesser extent, against B.coagulans, B.cereus and species of Enterococcus, Listeria, Kocuria, Staphylococcus, Corynebacterium, Salmonella, Pseudomonas and Escherichia. In Lactiplantibacillus plantarum (Lactobacillus plantarum), this protein is Bacteriocin plantaricin KL-1Y.